We begin with the raw amino-acid sequence, 256 residues long: Ribonuclease HII (256 aa).

Residues Lys-73–Val-256 enclose the RNase H type-2 domain. Residues Asp-79, Glu-80, and Asp-171 each contribute to the a divalent metal cation site.

The protein belongs to the RNase HII family. Mn(2+) serves as cofactor. Requires Mg(2+) as cofactor.

The protein localises to the cytoplasm. It carries out the reaction Endonucleolytic cleavage to 5'-phosphomonoester.. Its function is as follows. Endonuclease that specifically degrades the RNA of RNA-DNA hybrids. The sequence is that of Ribonuclease HII from Acetivibrio thermocellus (strain ATCC 27405 / DSM 1237 / JCM 9322 / NBRC 103400 / NCIMB 10682 / NRRL B-4536 / VPI 7372) (Clostridium thermocellum).